A 258-amino-acid polypeptide reads, in one-letter code: Tryptophan synthase alpha chain (258 aa).

Active-site proton acceptor residues include E47 and D58.

The protein belongs to the TrpA family. In terms of assembly, tetramer of two alpha and two beta chains.

The enzyme catalyses (1S,2R)-1-C-(indol-3-yl)glycerol 3-phosphate + L-serine = D-glyceraldehyde 3-phosphate + L-tryptophan + H2O. The protein operates within amino-acid biosynthesis; L-tryptophan biosynthesis; L-tryptophan from chorismate: step 5/5. Its function is as follows. The alpha subunit is responsible for the aldol cleavage of indoleglycerol phosphate to indole and glyceraldehyde 3-phosphate. The chain is Tryptophan synthase alpha chain from Bacillus cereus (strain AH820).